The chain runs to 331 residues: DNA-directed RNA polymerase subunit alpha (331 aa).

An alpha N-terminal domain (alpha-NTD) region spans residues 1–225 (MLDIAMPKLE…QYSSIIADFN (225 aa)). Residues 243–331 (PSEIYDMPIE…AARLNDGSAE (89 aa)) are alpha C-terminal domain (alpha-CTD).

This sequence belongs to the RNA polymerase alpha chain family. As to quaternary structure, homodimer. The RNAP catalytic core consists of 2 alpha, 1 beta, 1 beta' and 1 omega subunit. When a sigma factor is associated with the core the holoenzyme is formed, which can initiate transcription.

It carries out the reaction RNA(n) + a ribonucleoside 5'-triphosphate = RNA(n+1) + diphosphate. Its function is as follows. DNA-dependent RNA polymerase catalyzes the transcription of DNA into RNA using the four ribonucleoside triphosphates as substrates. In Herpetosiphon aurantiacus (strain ATCC 23779 / DSM 785 / 114-95), this protein is DNA-directed RNA polymerase subunit alpha.